Here is a 59-residue protein sequence, read N- to C-terminus: Protein translocase subunit SecE (59 aa).

Residues 35 to 55 (IVAIGIAIIGVVGFIIVLIGE) traverse the membrane as a helical segment.

It belongs to the SecE/SEC61-gamma family. As to quaternary structure, component of the Sec protein translocase complex. Heterotrimer consisting of SecY (alpha), SecG (beta) and SecE (gamma) subunits. The heterotrimers can form oligomers, although 1 heterotrimer is thought to be able to translocate proteins. Interacts with the ribosome. May interact with SecDF, and other proteins may be involved.

The protein resides in the cell membrane. Functionally, essential subunit of the Sec protein translocation channel SecYEG. Clamps together the 2 halves of SecY. May contact the channel plug during translocation. This Methanobrevibacter smithii (strain ATCC 35061 / DSM 861 / OCM 144 / PS) protein is Protein translocase subunit SecE.